A 55-amino-acid polypeptide reads, in one-letter code: Conotoxin vc5b (55 aa).

An N-terminal signal peptide occupies residues 1–15; that stretch reads VILLLLIASAPSVDA. Positions 16-41 are excised as a propeptide; that stretch reads QPKTKDDVPLAPLHDNAKSALQHLNQ. Residue glutamine 53 is modified to Glutamine amide.

Contains 2 disulfide bonds that can be either 'C1-C3, C2-C4' or 'C1-C4, C2-C3', since these disulfide connectivities have been observed for conotoxins with cysteine framework V (for examples, see AC P0DQQ7 and AC P81755). As to expression, expressed by the venom duct.

The protein localises to the secreted. The sequence is that of Conotoxin vc5b from Conus victoriae (Queen Victoria cone).